We begin with the raw amino-acid sequence, 404 residues long: MLLEQLRRAAEQRHALALTRRRRVAHTACAPHQAVGEDGSEPESLLTFCSNDYMGLANHPDVIAALVEGAQRYGAGSGASHLVSGHSLAHTQLEAELARWLAPHIPHACTLYFCTGYMANMAVLTALGTAGATLFCESLNHASLIDGARLARADVQRYPHCDTAALEALLAASTSERKLIVTDSVFSMDGNVAPLRKLLELAERHDAWIIVDDAHGFGVLGEQGHGVLEALGLSSERLIYIGTLGKAAGVAGAFVAAHETIIEHLVNTARPYIYTTAAPPAVAHALLASLAIIEGEEGTQRRAQLTRCIGMLREGLAQLAAIAGWTLGDSETAIQPLIVGDNGAALALSATLEADGIRVGAIRPPTVPEGTARLRITLSAAHTEDDVRRLLDALSAAVAQREVA.

Arg-20 is a substrate binding site. 116 to 117 (GY) contacts pyridoxal 5'-phosphate. Position 141 (His-141) interacts with substrate. Pyridoxal 5'-phosphate contacts are provided by Ser-187, His-215, and Thr-243. Lys-246 carries the N6-(pyridoxal phosphate)lysine modification. Thr-366 serves as a coordination point for substrate.

It belongs to the class-II pyridoxal-phosphate-dependent aminotransferase family. BioF subfamily. In terms of assembly, homodimer. Requires pyridoxal 5'-phosphate as cofactor.

It carries out the reaction 6-carboxyhexanoyl-[ACP] + L-alanine + H(+) = (8S)-8-amino-7-oxononanoate + holo-[ACP] + CO2. The protein operates within cofactor biosynthesis; biotin biosynthesis. Its function is as follows. Catalyzes the decarboxylative condensation of pimeloyl-[acyl-carrier protein] and L-alanine to produce 8-amino-7-oxononanoate (AON), [acyl-carrier protein], and carbon dioxide. In Cupriavidus necator (strain ATCC 17699 / DSM 428 / KCTC 22496 / NCIMB 10442 / H16 / Stanier 337) (Ralstonia eutropha), this protein is 8-amino-7-oxononanoate synthase.